Here is a 170-residue protein sequence, read N- to C-terminus: MLQPHLVIGSAFTFGDAFFTLFAFAILLVLIRIYAWKPLMGVMKEREEHIGSEIDAAEESRAQAEQLLAEQKSVLQQARVESQTMIENAKQLGEKEREEIVKTARRESERIKEEAKTDIAREKEDAISALREQVGSLSVLIASKVIEKNLDEKEQSNLIQDYIERLGDDK.

A helical transmembrane segment spans residues 11-31 (AFTFGDAFFTLFAFAILLVLI).

It belongs to the ATPase B chain family. F-type ATPases have 2 components, F(1) - the catalytic core - and F(0) - the membrane proton channel. F(1) has five subunits: alpha(3), beta(3), gamma(1), delta(1), epsilon(1). F(0) has three main subunits: a(1), b(2) and c(10-14). The alpha and beta chains form an alternating ring which encloses part of the gamma chain. F(1) is attached to F(0) by a central stalk formed by the gamma and epsilon chains, while a peripheral stalk is formed by the delta and b chains.

The protein resides in the cell membrane. Functionally, f(1)F(0) ATP synthase produces ATP from ADP in the presence of a proton or sodium gradient. F-type ATPases consist of two structural domains, F(1) containing the extramembraneous catalytic core and F(0) containing the membrane proton channel, linked together by a central stalk and a peripheral stalk. During catalysis, ATP synthesis in the catalytic domain of F(1) is coupled via a rotary mechanism of the central stalk subunits to proton translocation. Its function is as follows. Component of the F(0) channel, it forms part of the peripheral stalk, linking F(1) to F(0). This Listeria welshimeri serovar 6b (strain ATCC 35897 / DSM 20650 / CCUG 15529 / CIP 8149 / NCTC 11857 / SLCC 5334 / V8) protein is ATP synthase subunit b.